The primary structure comprises 107 residues: uncharacterized protein (107 aa).

Residues 9-31 (AAAIITAPTILAMMSTVLRALIF) form a helical membrane-spanning segment.

It is found in the membrane. This is an uncharacterized protein from Archaeoglobus fulgidus (strain ATCC 49558 / DSM 4304 / JCM 9628 / NBRC 100126 / VC-16).